Reading from the N-terminus, the 290-residue chain is ATP synthase gamma chain (290 aa).

Belongs to the ATPase gamma chain family. F-type ATPases have 2 components, CF(1) - the catalytic core - and CF(0) - the membrane proton channel. CF(1) has five subunits: alpha(3), beta(3), gamma(1), delta(1), epsilon(1). CF(0) has three main subunits: a, b and c.

It localises to the cell membrane. Functionally, produces ATP from ADP in the presence of a proton gradient across the membrane. The gamma chain is believed to be important in regulating ATPase activity and the flow of protons through the CF(0) complex. This Roseiflexus castenholzii (strain DSM 13941 / HLO8) protein is ATP synthase gamma chain.